Reading from the N-terminus, the 515-residue chain is Maturase K (515 aa).

This sequence belongs to the intron maturase 2 family. MatK subfamily.

It localises to the plastid. Its subcellular location is the chloroplast. Usually encoded in the trnK tRNA gene intron. Probably assists in splicing its own and other chloroplast group II introns. This Picea engelmannii (Engelmann's spruce) protein is Maturase K.